Here is a 506-residue protein sequence, read N- to C-terminus: Glutamate--tRNA ligase (506 aa).

Positions 23-33 (PSPTGTPHVGL) match the 'HIGH' region motif. The 'KMSKS' region motif lies at 267–271 (KLSKR). K270 serves as a coordination point for ATP.

The protein belongs to the class-I aminoacyl-tRNA synthetase family. Glutamate--tRNA ligase type 1 subfamily. Monomer.

Its subcellular location is the cytoplasm. It carries out the reaction tRNA(Glu) + L-glutamate + ATP = L-glutamyl-tRNA(Glu) + AMP + diphosphate. Functionally, catalyzes the attachment of glutamate to tRNA(Glu) in a two-step reaction: glutamate is first activated by ATP to form Glu-AMP and then transferred to the acceptor end of tRNA(Glu). This Clavibacter sepedonicus (Clavibacter michiganensis subsp. sepedonicus) protein is Glutamate--tRNA ligase.